We begin with the raw amino-acid sequence, 348 residues long: Chaperone protein DnaJ (348 aa).

A J domain is found at 3-65 (DLYGILGVDH…EQRQRYDRHV (63 aa)). A CR-type zinc finger spans residues 109-191 (GGSQVVKIDS…CYGNGSRSAP (83 aa)). Residues Cys-122, Cys-125, Cys-139, Cys-142, Cys-165, Cys-168, Cys-179, and Cys-182 each contribute to the Zn(2+) site. 4 CXXCXGXG motif repeats span residues 122 to 129 (CDVCNGTR), 139 to 146 (CFDCNGSG), 165 to 172 (CSKCRGNG), and 179 to 186 (CRRCYGNG).

This sequence belongs to the DnaJ family. In terms of assembly, homodimer. The cofactor is Zn(2+).

It localises to the cytoplasm. Its function is as follows. Participates actively in the response to hyperosmotic and heat shock by preventing the aggregation of stress-denatured proteins and by disaggregating proteins, also in an autonomous, DnaK-independent fashion. Unfolded proteins bind initially to DnaJ; upon interaction with the DnaJ-bound protein, DnaK hydrolyzes its bound ATP, resulting in the formation of a stable complex. GrpE releases ADP from DnaK; ATP binding to DnaK triggers the release of the substrate protein, thus completing the reaction cycle. Several rounds of ATP-dependent interactions between DnaJ, DnaK and GrpE are required for fully efficient folding. Also involved, together with DnaK and GrpE, in the DNA replication of plasmids through activation of initiation proteins. This Tropheryma whipplei (strain TW08/27) (Whipple's bacillus) protein is Chaperone protein DnaJ.